The primary structure comprises 203 residues: FMN-dependent NADH:quinone oxidoreductase (203 aa).

Residues Ser9, 15–17, and 138–141 each bind FMN; these read SVS and SRGG.

Belongs to the azoreductase type 1 family. Homodimer. Requires FMN as cofactor.

It carries out the reaction 2 a quinone + NADH + H(+) = 2 a 1,4-benzosemiquinone + NAD(+). It catalyses the reaction N,N-dimethyl-1,4-phenylenediamine + anthranilate + 2 NAD(+) = 2-(4-dimethylaminophenyl)diazenylbenzoate + 2 NADH + 2 H(+). Quinone reductase that provides resistance to thiol-specific stress caused by electrophilic quinones. Its function is as follows. Also exhibits azoreductase activity. Catalyzes the reductive cleavage of the azo bond in aromatic azo compounds to the corresponding amines. This is FMN-dependent NADH:quinone oxidoreductase from Methylorubrum populi (strain ATCC BAA-705 / NCIMB 13946 / BJ001) (Methylobacterium populi).